The primary structure comprises 117 residues: Aspartate 1-decarboxylase (117 aa).

Serine 25 acts as the Schiff-base intermediate with substrate; via pyruvic acid in catalysis. Residue serine 25 is modified to Pyruvic acid (Ser). Threonine 57 lines the substrate pocket. Tyrosine 58 (proton donor) is an active-site residue. Glycine 73 to alanine 75 serves as a coordination point for substrate.

Belongs to the PanD family. As to quaternary structure, heterooctamer of four alpha and four beta subunits. It depends on pyruvate as a cofactor. Is synthesized initially as an inactive proenzyme, which is activated by self-cleavage at a specific serine bond to produce a beta-subunit with a hydroxyl group at its C-terminus and an alpha-subunit with a pyruvoyl group at its N-terminus.

It is found in the cytoplasm. It catalyses the reaction L-aspartate + H(+) = beta-alanine + CO2. It participates in cofactor biosynthesis; (R)-pantothenate biosynthesis; beta-alanine from L-aspartate: step 1/1. In terms of biological role, catalyzes the pyruvoyl-dependent decarboxylation of aspartate to produce beta-alanine. The chain is Aspartate 1-decarboxylase from Thermoanaerobacter pseudethanolicus (strain ATCC 33223 / 39E) (Clostridium thermohydrosulfuricum).